Consider the following 485-residue polypeptide: Aspartyl/glutamyl-tRNA(Asn/Gln) amidotransferase subunit B (485 aa).

It belongs to the GatB/GatE family. GatB subfamily. As to quaternary structure, heterotrimer of A, B and C subunits.

The enzyme catalyses L-glutamyl-tRNA(Gln) + L-glutamine + ATP + H2O = L-glutaminyl-tRNA(Gln) + L-glutamate + ADP + phosphate + H(+). The catalysed reaction is L-aspartyl-tRNA(Asn) + L-glutamine + ATP + H2O = L-asparaginyl-tRNA(Asn) + L-glutamate + ADP + phosphate + 2 H(+). Functionally, allows the formation of correctly charged Asn-tRNA(Asn) or Gln-tRNA(Gln) through the transamidation of misacylated Asp-tRNA(Asn) or Glu-tRNA(Gln) in organisms which lack either or both of asparaginyl-tRNA or glutaminyl-tRNA synthetases. The reaction takes place in the presence of glutamine and ATP through an activated phospho-Asp-tRNA(Asn) or phospho-Glu-tRNA(Gln). The sequence is that of Aspartyl/glutamyl-tRNA(Asn/Gln) amidotransferase subunit B from Borrelia recurrentis (strain A1).